The primary structure comprises 891 residues: Translation initiation factor IF-2 (891 aa).

Residues 50 to 303 form a disordered region; it reads KKEHGSADES…TSMQHGFDKS (254 aa). 2 stretches are compositionally biased toward basic and acidic residues: residues 102-237 and 245-261; these read TLEE…KTAD and HARE…EQQP. Residues 390-559 form the tr-type G domain; it reads GRAPVVTIMG…LLQSEVLELT (170 aa). Positions 399–406 are G1; that stretch reads GHVDHGKT. Position 399–406 (399–406) interacts with GTP; that stretch reads GHVDHGKT. Positions 424-428 are G2; the sequence is GITQH. The segment at 445-448 is G3; sequence DTPG. Residues 445–449 and 499–502 contribute to the GTP site; these read DTPGH and NKID. The segment at 499–502 is G4; it reads NKID. Residues 535–537 are G5; that stretch reads SAK.

Belongs to the TRAFAC class translation factor GTPase superfamily. Classic translation factor GTPase family. IF-2 subfamily.

The protein resides in the cytoplasm. One of the essential components for the initiation of protein synthesis. Protects formylmethionyl-tRNA from spontaneous hydrolysis and promotes its binding to the 30S ribosomal subunits. Also involved in the hydrolysis of GTP during the formation of the 70S ribosomal complex. The polypeptide is Translation initiation factor IF-2 (Aliivibrio salmonicida (strain LFI1238) (Vibrio salmonicida (strain LFI1238))).